The primary structure comprises 170 residues: MAPTVMMASSATAVAPFQGLKSTASLPVARRSSRSLGNVSNGGRIRCMQVWPAYGNKKFETLSYLPPLSTDDLLKQVDYLLRNGWIPCLEFSKVGFVYRENSTSPCYYDGRYWTMWKLPMFGCNDATQVYKELQEAIKSYPDAFHRVIGFDNIKQTQCVSFIAYKPPGSD.

Transit peptides (chloroplast) lie at residues 1–46 (MAPT…GRIR) and 1–47 (MAPT…RIRC).

It belongs to the RuBisCO small chain family. As to quaternary structure, heterohexadecamer of 8 large and 8 small subunits.

The protein resides in the plastid. The protein localises to the chloroplast. In terms of biological role, ruBisCO catalyzes two reactions: the carboxylation of D-ribulose 1,5-bisphosphate, the primary event in carbon dioxide fixation, as well as the oxidative fragmentation of the pentose substrate. Both reactions occur simultaneously and in competition at the same active site. Although the small subunit is not catalytic it is essential for maximal activity. This chain is Ribulose bisphosphate carboxylase small subunit, chloroplastic, found in Zea mays (Maize).